A 156-amino-acid chain; its full sequence is Small ribosomal subunit protein uS7c (156 aa).

It belongs to the universal ribosomal protein uS7 family. As to quaternary structure, part of the 30S ribosomal subunit.

The protein resides in the plastid. Its subcellular location is the chloroplast. Its function is as follows. One of the primary rRNA binding proteins, it binds directly to 16S rRNA where it nucleates assembly of the head domain of the 30S subunit. This chain is Small ribosomal subunit protein uS7c (rps7), found in Gracilaria tenuistipitata var. liui (Red alga).